The chain runs to 286 residues: Pantothenate synthetase (286 aa).

30-37 (MGFLHEGH) contacts ATP. The active-site Proton donor is the His-37. Gln-61 contributes to the (R)-pantoate binding site. Gln-61 lines the beta-alanine pocket. Position 147–150 (147–150 (GLKD)) interacts with ATP. Gln-153 serves as a coordination point for (R)-pantoate. Residues Val-176 and 184–187 (KSSR) each bind ATP.

Belongs to the pantothenate synthetase family. Homodimer.

It localises to the cytoplasm. The catalysed reaction is (R)-pantoate + beta-alanine + ATP = (R)-pantothenate + AMP + diphosphate + H(+). Its pathway is cofactor biosynthesis; (R)-pantothenate biosynthesis; (R)-pantothenate from (R)-pantoate and beta-alanine: step 1/1. Catalyzes the condensation of pantoate with beta-alanine in an ATP-dependent reaction via a pantoyl-adenylate intermediate. The protein is Pantothenate synthetase of Bacillus velezensis (strain DSM 23117 / BGSC 10A6 / LMG 26770 / FZB42) (Bacillus amyloliquefaciens subsp. plantarum).